The sequence spans 200 residues: Recombination protein RecR (200 aa).

The segment at 57–72 (CEHCRTFTEEDICSIC) adopts a C4-type zinc-finger fold. Residues 81–176 (RLLCVVEMPA…KVSRIAHGIP (96 aa)) form the Toprim domain.

Belongs to the RecR family.

Its function is as follows. May play a role in DNA repair. It seems to be involved in an RecBC-independent recombinational process of DNA repair. It may act with RecF and RecO. The polypeptide is Recombination protein RecR (Mannheimia succiniciproducens (strain KCTC 0769BP / MBEL55E)).